The chain runs to 505 residues: Amidophosphoribosyltransferase (505 aa).

The Nucleophile role is filled by cysteine 2. Positions 2-236 (CGIVGIAGVM…PGEAIYITEE (235 aa)) constitute a Glutamine amidotransferase type-2 domain. Positions 305, 367, and 368 each coordinate Mg(2+).

The protein in the C-terminal section; belongs to the purine/pyrimidine phosphoribosyltransferase family. As to quaternary structure, homotetramer. The cofactor is Mg(2+).

The catalysed reaction is 5-phospho-beta-D-ribosylamine + L-glutamate + diphosphate = 5-phospho-alpha-D-ribose 1-diphosphate + L-glutamine + H2O. Its pathway is purine metabolism; IMP biosynthesis via de novo pathway; N(1)-(5-phospho-D-ribosyl)glycinamide from 5-phospho-alpha-D-ribose 1-diphosphate: step 1/2. Its activity is regulated as follows. Inhibited by iodoacetamide and by the glutamine analogs chloroketone and DON. Functionally, catalyzes the formation of phosphoribosylamine from phosphoribosylpyrophosphate (PRPP) and glutamine. Can also use NH(3) in place of glutamine. The sequence is that of Amidophosphoribosyltransferase from Escherichia coli (strain K12).